A 233-amino-acid polypeptide reads, in one-letter code: Uracil-DNA glycosylase (233 aa).

Asp70 acts as the Proton acceptor in catalysis.

Belongs to the uracil-DNA glycosylase (UDG) superfamily. UNG family.

The protein localises to the cytoplasm. It carries out the reaction Hydrolyzes single-stranded DNA or mismatched double-stranded DNA and polynucleotides, releasing free uracil.. Functionally, excises uracil residues from the DNA which can arise as a result of misincorporation of dUMP residues by DNA polymerase or due to deamination of cytosine. The chain is Uracil-DNA glycosylase from Helicobacter acinonychis (strain Sheeba).